Consider the following 591-residue polypeptide: Fidgetin-like protein 1 (591 aa).

Disordered regions lie at residues 1-117 and 223-249; these read MYSP…KSSL and GQEP…SQPI. A compositionally biased stretch (basic and acidic residues) spans 17–26; that stretch reads KRPETEENRG. Positions 76–93 are enriched in acidic residues; that stretch reads DDDPESIVIDEDDEEDEP. Residues 237 to 249 are compositionally biased toward polar residues; the sequence is RQSSSQSNHSQPI. ATP-binding positions include A319 and 359-364; that span reads GTGKTM.

This sequence belongs to the AAA ATPase family. Hexamer. Mg(2+) serves as cofactor.

The protein resides in the nucleus. The enzyme catalyses ATP + H2O = ADP + phosphate + H(+). Has a role in spindle assembly which acts in the progression through mitosis during embryogenesis. Required for fertility. This is Fidgetin-like protein 1 (figl-1) from Caenorhabditis briggsae.